Consider the following 658-residue polypeptide: Glycogen debranching enzyme (658 aa).

Residue Asp336 is the Nucleophile of the active site. Glu371 serves as the catalytic Proton donor. The segment at 459–484 is disordered; it reads EANGEENRDGTNSNYSDNHGKEGLGG.

Belongs to the glycosyl hydrolase 13 family.

It catalyses the reaction Hydrolysis of (1-&gt;6)-alpha-D-glucosidic linkages to branches with degrees of polymerization of three or four glucose residues in limit dextrin.. It functions in the pathway glycan degradation; glycogen degradation. Its function is as follows. Removes maltotriose and maltotetraose chains that are attached by 1,6-alpha-linkage to the limit dextrin main chain, generating a debranched limit dextrin. This Salmonella paratyphi B (strain ATCC BAA-1250 / SPB7) protein is Glycogen debranching enzyme.